Reading from the N-terminus, the 423-residue chain is AP-1 complex subunit mu-1 (423 aa).

Serine 2 is modified (N-acetylserine). 3 positions are modified to phosphothreonine: threonine 152, threonine 154, and threonine 223. The MHD domain maps to 168–421 (KNEVFLDVIE…ITQNGDYQLR (254 aa)).

It belongs to the adaptor complexes medium subunit family. Adaptor protein complex 1 (AP-1) is a heterotetramer composed of two large adaptins (gamma-type subunit AP1G1 and beta-type subunit AP1B1), a medium adaptin (mu-type subunit AP1M1 or AP1M2) and a small adaptin (sigma-type subunit AP1S1 or AP1S2 or AP1S3). Interacts with MARCHF11. In terms of processing, phosphorylation of membrane-bound AP1M1/AP1M2 increases its affinity for sorting signals.

Its subcellular location is the cytoplasmic vesicle. The protein resides in the clathrin-coated vesicle membrane. It localises to the golgi apparatus. Subunit of clathrin-associated adaptor protein complex 1 that plays a role in protein sorting in the trans-Golgi network (TGN) and endosomes. The AP complexes mediate the recruitment of clathrin to membranes and the recognition of sorting signals within the cytosolic tails of transmembrane cargo molecules. This Bos taurus (Bovine) protein is AP-1 complex subunit mu-1.